The primary structure comprises 1331 residues: DNA-directed RNA polymerase subunit beta' (1331 aa).

The Zn(2+) site is built by cysteine 60, cysteine 62, cysteine 75, and cysteine 78. Aspartate 535, aspartate 537, and aspartate 539 together coordinate Mg(2+). Cysteine 902, cysteine 979, cysteine 986, and cysteine 989 together coordinate Zn(2+).

This sequence belongs to the RNA polymerase beta' chain family. As to quaternary structure, the RNAP catalytic core consists of 2 alpha, 1 beta, 1 beta' and 1 omega subunit. When a sigma factor is associated with the core the holoenzyme is formed, which can initiate transcription. The cofactor is Mg(2+). It depends on Zn(2+) as a cofactor.

It catalyses the reaction RNA(n) + a ribonucleoside 5'-triphosphate = RNA(n+1) + diphosphate. DNA-dependent RNA polymerase catalyzes the transcription of DNA into RNA using the four ribonucleoside triphosphates as substrates. The sequence is that of DNA-directed RNA polymerase subunit beta' from Corynebacterium aurimucosum (strain ATCC 700975 / DSM 44827 / CIP 107346 / CN-1) (Corynebacterium nigricans).